The following is a 905-amino-acid chain: DNA mismatch repair protein MutS (905 aa).

The segment at 272–292 (KKPPLSPPSREATGSTMAIDP) is disordered. 654 to 661 (GPNMAGKS) lines the ATP pocket.

The protein belongs to the DNA mismatch repair MutS family.

Its function is as follows. This protein is involved in the repair of mismatches in DNA. It is possible that it carries out the mismatch recognition step. This protein has a weak ATPase activity. In Rhodopseudomonas palustris (strain BisB18), this protein is DNA mismatch repair protein MutS.